Here is a 188-residue protein sequence, read N- to C-terminus: Phosphoribosylglycinamide formyltransferase (188 aa).

Residue 12–14 (GSN) participates in N(1)-(5-phospho-beta-D-ribosyl)glycinamide binding. (6R)-10-formyltetrahydrofolate contacts are provided by residues Lys66, 91 to 94 (MRLV), and Asn108. Residue His110 is the Proton donor of the active site.

The protein belongs to the GART family.

It catalyses the reaction N(1)-(5-phospho-beta-D-ribosyl)glycinamide + (6R)-10-formyltetrahydrofolate = N(2)-formyl-N(1)-(5-phospho-beta-D-ribosyl)glycinamide + (6S)-5,6,7,8-tetrahydrofolate + H(+). Its pathway is purine metabolism; IMP biosynthesis via de novo pathway; N(2)-formyl-N(1)-(5-phospho-D-ribosyl)glycinamide from N(1)-(5-phospho-D-ribosyl)glycinamide (10-formyl THF route): step 1/1. Catalyzes the transfer of a formyl group from 10-formyltetrahydrofolate to 5-phospho-ribosyl-glycinamide (GAR), producing 5-phospho-ribosyl-N-formylglycinamide (FGAR) and tetrahydrofolate. The sequence is that of Phosphoribosylglycinamide formyltransferase from Staphylococcus epidermidis (strain ATCC 35984 / DSM 28319 / BCRC 17069 / CCUG 31568 / BM 3577 / RP62A).